The primary structure comprises 298 residues: ATP synthase gamma chain (298 aa).

It belongs to the ATPase gamma chain family. F-type ATPases have 2 components, CF(1) - the catalytic core - and CF(0) - the membrane proton channel. CF(1) has five subunits: alpha(3), beta(3), gamma(1), delta(1), epsilon(1). CF(0) has three main subunits: a, b and c.

The protein localises to the cell inner membrane. Produces ATP from ADP in the presence of a proton gradient across the membrane. The gamma chain is believed to be important in regulating ATPase activity and the flow of protons through the CF(0) complex. The sequence is that of ATP synthase gamma chain from Zymomonas mobilis subsp. mobilis (strain ATCC 31821 / ZM4 / CP4).